The chain runs to 156 residues: Putative F-box protein R637 (156 aa).

The F-box domain maps to 4-51 (HISSLLNEDCVRHIMCFLTDKEKGKFCLTCRDLLYLIKDVKFNDPVNK).

The polypeptide is Putative F-box protein R637 (Acanthamoeba polyphaga mimivirus (APMV)).